The sequence spans 397 residues: Mannonate dehydratase (397 aa).

This sequence belongs to the mannonate dehydratase family. The cofactor is Fe(2+). Requires Mn(2+) as cofactor.

It catalyses the reaction D-mannonate = 2-dehydro-3-deoxy-D-gluconate + H2O. It functions in the pathway carbohydrate metabolism; pentose and glucuronate interconversion. Functionally, catalyzes the dehydration of D-mannonate. This chain is Mannonate dehydratase, found in Yersinia pestis bv. Antiqua (strain Angola).